Reading from the N-terminus, the 300-residue chain is Kynurenine formamidase (300 aa).

Positions 86–90 (HGGYW) match the HGGXW motif. S157 acts as the Nucleophile in catalysis. Active-site residues include D244 and H276.

It belongs to the kynurenine formamidase family. As to quaternary structure, homodimer.

It catalyses the reaction N-formyl-L-kynurenine + H2O = L-kynurenine + formate + H(+). It functions in the pathway amino-acid degradation; L-tryptophan degradation via kynurenine pathway; L-kynurenine from L-tryptophan: step 2/2. In terms of biological role, catalyzes the hydrolysis of N-formyl-L-kynurenine to L-kynurenine, the second step in the kynurenine pathway of tryptophan degradation. Required for elimination of toxic metabolites. This Drosophila melanogaster (Fruit fly) protein is Kynurenine formamidase (KFase).